Here is an 802-residue protein sequence, read N- to C-terminus: MRCPSLARLPNRALSGLTRSPVRLQSQNFLYQRCASTAALRSPIAGPAYQSVFHRHNLQRRNASAATTAAVLEAAASNPDGLSQEAIIDNLDPAEAIRLSRLRNIGIAAHIDSGKTTCTERVLFYTGRIKAIHEVRGRDNVGAKMDSMDLEREKGITIQSAATFCDWIKKGDDGKEEKYHINLIDTPGHIDFTIEVERALRVLDGAVMILCAVSGVQSQTITVDRQMRRYNVPRISFVNKMDRMGANPFKAVEQINTKLKIPAAAVQVPIGAEDEFEGVVDLIRMKSIYNDGPNGETVVVKDEIPEKVKSVVEERRRMLIETLADVDDEIAELFLEETEPTEQQLKAAIRRATIGLKFTPVFMGSALANKSVQPMLDGVIDYLPNPSEVENLALDRKRDEASVKLVPYNSQPFVGLAFKLEESNFGQLTYIRVYQGTLRKGANVFNARNNKKVKVPRIVRMHSNEMEEVSEIGAGEICAVFGVDCASGDTFTDGQLGYTMTSMFVPEPVISLSIKPKNSKDSANFSKAMARFQREDPTFRVSYNAESEETLISGMGELHLDIYIERMRREYRVDCVTGPPQVAYRETIGNRVEFDHLLKKQSGGPGEYARVVGWMEPTGKLEDNKFEEQIVGGSISEKFLFACEKGFNLACEKGPLIGHKVLGTKMVINDGATHMTDSSEMSFKNATQQAFRKAFMESNPSVLEPMMKIAVTAPGEFQGDVISLLNKRNATINDTETGVDEFTVYADCSLNGMFGFSTHLRAATQGKGEFTMEFSHYEKAQPQLQKELIQKYLKAQADRHKK.

A mitochondrion-targeting transit peptide spans 1 to 24; that stretch reads MRCPSLARLPNRALSGLTRSPVRL. The tr-type G domain maps to 100–387; that stretch reads SRLRNIGIAA…GVIDYLPNPS (288 aa). Residues 109–116, 185–189, and 239–242 each bind GTP; these read AHIDSGKT, DTPGH, and NKMD.

It belongs to the TRAFAC class translation factor GTPase superfamily. Classic translation factor GTPase family. EF-G/EF-2 subfamily.

Its subcellular location is the mitochondrion. It participates in protein biosynthesis; polypeptide chain elongation. Functionally, mitochondrial GTPase that catalyzes the GTP-dependent ribosomal translocation step during translation elongation. During this step, the ribosome changes from the pre-translocational (PRE) to the post-translocational (POST) state as the newly formed A-site-bound peptidyl-tRNA and P-site-bound deacylated tRNA move to the P and E sites, respectively. Catalyzes the coordinated movement of the two tRNA molecules, the mRNA and conformational changes in the ribosome. The protein is Elongation factor G, mitochondrial (mef1) of Aspergillus fumigatus (strain CBS 144.89 / FGSC A1163 / CEA10) (Neosartorya fumigata).